The chain runs to 58 residues: Small ribosomal subunit protein bS21 (58 aa).

A disordered region spans residues 36-58; it reads RHHETPVEKYKRKLQQRRRSRRR. Over residues 45–58 the composition is skewed to basic residues; that stretch reads YKRKLQQRRRSRRR.

The protein belongs to the bacterial ribosomal protein bS21 family.

The chain is Small ribosomal subunit protein bS21 from Prochlorococcus marinus (strain NATL1A).